Consider the following 475-residue polypeptide: Trifunctional enzyme subunit beta, mitochondrial (475 aa).

The transit peptide at 1 to 34 (MTTILTYPFKNLPTASKWALRFSIRPLSCSSQLR) directs the protein to the mitochondrion. Position 73 is an N6-acetyllysine; alternate (Lys73). Position 73 is an N6-succinyllysine; alternate (Lys73). Cys139 (acyl-thioester intermediate) is an active-site residue. The stretch at 174–221 (IRHSRKMRKLMLDLNKAKSMGQRLSLISKFRFNFLAPELPAVSEFSTS) is an intramembrane region. An N6-acetyllysine; alternate modification is found at Lys189. Position 189 is an N6-succinyllysine; alternate (Lys189). N6-succinyllysine is present on residues Lys191, Lys273, and Lys292. An N6-acetyllysine; alternate modification is found at Lys294. Lys294 is subject to N6-succinyllysine; alternate. Lys299 carries the N6-acetyllysine modification. Lys333 carries the post-translational modification N6-acetyllysine; alternate. N6-succinyllysine; alternate is present on Lys333. Lys349 and Lys362 each carry N6-acetyllysine. Cys459 (proton donor/acceptor) is an active-site residue.

This sequence belongs to the thiolase-like superfamily. Thiolase family. In terms of assembly, heterotetramer of 2 alpha/HADHA and 2 beta/HADHB subunits; forms the mitochondrial trifunctional enzyme. Also purified as higher order heterooligomers including a 4 alpha/HADHA and 4 beta/HADHB heterooligomer which physiological significance remains unclear. The mitochondrial trifunctional enzyme interacts with MTLN. Interacts with RSAD2/viperin.

The protein localises to the mitochondrion. It is found in the mitochondrion inner membrane. The protein resides in the mitochondrion outer membrane. It localises to the endoplasmic reticulum. The enzyme catalyses an acyl-CoA + acetyl-CoA = a 3-oxoacyl-CoA + CoA. It carries out the reaction butanoyl-CoA + acetyl-CoA = 3-oxohexanoyl-CoA + CoA. The catalysed reaction is hexanoyl-CoA + acetyl-CoA = 3-oxooctanoyl-CoA + CoA. It catalyses the reaction octanoyl-CoA + acetyl-CoA = 3-oxodecanoyl-CoA + CoA. The enzyme catalyses decanoyl-CoA + acetyl-CoA = 3-oxododecanoyl-CoA + CoA. It carries out the reaction dodecanoyl-CoA + acetyl-CoA = 3-oxotetradecanoyl-CoA + CoA. The catalysed reaction is tetradecanoyl-CoA + acetyl-CoA = 3-oxohexadecanoyl-CoA + CoA. It functions in the pathway lipid metabolism; fatty acid beta-oxidation. Its function is as follows. Mitochondrial trifunctional enzyme catalyzes the last three of the four reactions of the mitochondrial beta-oxidation pathway. The mitochondrial beta-oxidation pathway is the major energy-producing process in tissues and is performed through four consecutive reactions breaking down fatty acids into acetyl-CoA. Among the enzymes involved in this pathway, the trifunctional enzyme exhibits specificity for long-chain fatty acids. Mitochondrial trifunctional enzyme is a heterotetrameric complex composed of two proteins, the trifunctional enzyme subunit alpha/HADHA carries the 2,3-enoyl-CoA hydratase and the 3-hydroxyacyl-CoA dehydrogenase activities, while the trifunctional enzyme subunit beta/HADHB described here bears the 3-ketoacyl-CoA thiolase activity. The polypeptide is Trifunctional enzyme subunit beta, mitochondrial (HADHB) (Pan troglodytes (Chimpanzee)).